Consider the following 318-residue polypeptide: Ribose-phosphate pyrophosphokinase 2 (318 aa).

96–101 (RQDKKD) contributes to the ATP binding site. Mg(2+) is bound by residues Asp128, His130, Asp139, and Asp143. An ATP-binding site is contributed by His130. Positions 212–227 (KDRVAILVDDMADTCG) are binding of phosphoribosylpyrophosphate.

The protein belongs to the ribose-phosphate pyrophosphokinase family. In terms of assembly, homodimer. The active form is probably a hexamer composed of 3 homodimers. Mg(2+) serves as cofactor.

It catalyses the reaction D-ribose 5-phosphate + ATP = 5-phospho-alpha-D-ribose 1-diphosphate + AMP + H(+). The protein operates within metabolic intermediate biosynthesis; 5-phospho-alpha-D-ribose 1-diphosphate biosynthesis; 5-phospho-alpha-D-ribose 1-diphosphate from D-ribose 5-phosphate (route I): step 1/1. Activated by magnesium and inorganic phosphate. Competitively or non-competitively inhibited by ADP, 2,3-bisphosphoglyceride or GDP. Functionally, catalyzes the synthesis of phosphoribosylpyrophosphate (PRPP) that is essential for nucleotide synthesis. This chain is Ribose-phosphate pyrophosphokinase 2 (prps2), found in Xenopus laevis (African clawed frog).